A 338-amino-acid polypeptide reads, in one-letter code: Probable tRNA pseudouridine synthase B (338 aa).

Asp-78 acts as the Nucleophile in catalysis. Residues 245-320 (LPKIILRDSA…IAASPIRVLM (76 aa)) enclose the PUA domain.

Belongs to the pseudouridine synthase TruB family. Type 2 subfamily.

It catalyses the reaction uridine(55) in tRNA = pseudouridine(55) in tRNA. Its function is as follows. Could be responsible for synthesis of pseudouridine from uracil-55 in the psi GC loop of transfer RNAs. The sequence is that of Probable tRNA pseudouridine synthase B from Methanosarcina acetivorans (strain ATCC 35395 / DSM 2834 / JCM 12185 / C2A).